Reading from the N-terminus, the 219-residue chain is Probable GTP-binding protein EngB (219 aa).

Residues 24 to 207 form the EngB-type G domain; the sequence is VQPEIAFAGR…HALIESWLRP (184 aa). GTP is bound by residues 32–39, 59–63, 81–84, 148–151, and 185–188; these read GRSNAGKS, GRTQH, DLPG, TKCD, and LFSA. Ser39 and Thr61 together coordinate Mg(2+).

This sequence belongs to the TRAFAC class TrmE-Era-EngA-EngB-Septin-like GTPase superfamily. EngB GTPase family. Mg(2+) is required as a cofactor.

In terms of biological role, necessary for normal cell division and for the maintenance of normal septation. The polypeptide is Probable GTP-binding protein EngB (Burkholderia thailandensis (strain ATCC 700388 / DSM 13276 / CCUG 48851 / CIP 106301 / E264)).